A 441-amino-acid polypeptide reads, in one-letter code: Anti-sigma-I factor RsgI (441 aa).

Residues 1-53 (MMNKGIVMDIKKHSVVVLTPNGEFITCKRKGDSCMIGEEISFDEQEQKASRFS) are Cytoplasmic-facing. Residues 3 to 51 (NKGIVMDIKKHSVVVLTPNGEFITCKRKGDSCMIGEEISFDEQEQKASR) form the RsgI N-terminal anti-sigma domain. A helical transmembrane segment spans residues 54–76 (IPYFLKPASLLVACFLCALLFFY). Over 77–441 (NQPEEKVFAY…HQQGNEKKNQ (365 aa)) the chain is Extracellular. The segment at 213 to 441 (ENEKNKSVTP…HQQGNEKKNQ (229 aa)) is disordered. Over residues 219–230 (SVTPPATPSNPV) the composition is skewed to polar residues. Residues 240–251 (PDSSPDVVPDLS) show a composition bias toward low complexity. Basic and acidic residues predominate over residues 252-281 (SVKDKKYEKPEYKEQKKIEEQPTKQIKENN). 3 stretches are compositionally biased toward low complexity: residues 282–328 (GRGS…QQGN), 336–358 (NNGHQQENNGRGSQGNNGNQQGN), and 366–408 (NNGH…NGRG). Residues 411–428 (KENVGNEQGNNGRGSQQE) show a composition bias toward polar residues. A compositionally biased stretch (basic and acidic residues) spans 429-441 (NRGHQQGNEKKNQ).

In terms of assembly, interacts (via RsgI N-terminal anti-sigma domain) with SigI.

The protein resides in the cell membrane. Its function is as follows. Anti-sigma factor for SigI. Negatively regulates SigI activity through direct interaction. Has no direct effect on virulence gene expression. The chain is Anti-sigma-I factor RsgI from Bacillus anthracis.